The chain runs to 596 residues: UvrABC system protein C (596 aa).

In terms of domain architecture, GIY-YIG spans Asp-14–Val-91. In terms of domain architecture, UVR spans Glu-196–Val-231.

The protein belongs to the UvrC family. As to quaternary structure, interacts with UvrB in an incision complex.

The protein localises to the cytoplasm. In terms of biological role, the UvrABC repair system catalyzes the recognition and processing of DNA lesions. UvrC both incises the 5' and 3' sides of the lesion. The N-terminal half is responsible for the 3' incision and the C-terminal half is responsible for the 5' incision. The sequence is that of UvrABC system protein C from Lysinibacillus sphaericus (strain C3-41).